The following is a 427-amino-acid chain: Ribosomal protein uS12 methylthiotransferase RimO (427 aa).

The region spanning M1–I116 is the MTTase N-terminal domain. [4Fe-4S] cluster-binding residues include C10, C46, C79, C145, C149, and C152. One can recognise a Radical SAM core domain in the interval V131–E360. The 64-residue stretch at E363 to E426 folds into the TRAM domain.

The protein belongs to the methylthiotransferase family. RimO subfamily. [4Fe-4S] cluster is required as a cofactor.

It is found in the cytoplasm. It carries out the reaction L-aspartate(89)-[ribosomal protein uS12]-hydrogen + (sulfur carrier)-SH + AH2 + 2 S-adenosyl-L-methionine = 3-methylsulfanyl-L-aspartate(89)-[ribosomal protein uS12]-hydrogen + (sulfur carrier)-H + 5'-deoxyadenosine + L-methionine + A + S-adenosyl-L-homocysteine + 2 H(+). In terms of biological role, catalyzes the methylthiolation of an aspartic acid residue of ribosomal protein uS12. This Thermosipho africanus (strain TCF52B) protein is Ribosomal protein uS12 methylthiotransferase RimO.